Reading from the N-terminus, the 83-residue chain is Exodeoxyribonuclease 7 small subunit (83 aa).

Belongs to the XseB family. In terms of assembly, heterooligomer composed of large and small subunits.

The protein localises to the cytoplasm. It catalyses the reaction Exonucleolytic cleavage in either 5'- to 3'- or 3'- to 5'-direction to yield nucleoside 5'-phosphates.. In terms of biological role, bidirectionally degrades single-stranded DNA into large acid-insoluble oligonucleotides, which are then degraded further into small acid-soluble oligonucleotides. This Rhodopseudomonas palustris (strain HaA2) protein is Exodeoxyribonuclease 7 small subunit.